The sequence spans 370 residues: Protein FAM110B (370 aa).

Disordered stretches follow at residues 127–151 (SSEG…RSEA) and 237–256 (KSPE…RPSL). Phosphoserine is present on residues Ser238 and Ser301. Positions 317-337 (DCEQSQDSNSDLRNDDSANDR) are disordered. The span at 326–335 (SDLRNDDSAN) shows a compositional bias: basic and acidic residues.

Belongs to the FAM110 family.

The protein localises to the cytoplasm. The protein resides in the cytoskeleton. Its subcellular location is the microtubule organizing center. It localises to the centrosome. This Pongo abelii (Sumatran orangutan) protein is Protein FAM110B (FAM110B).